The primary structure comprises 379 residues: cAMP-dependent protein kinase type I-alpha regulatory subunit (379 aa).

Met1 carries the N-acetylmethionine modification. The dimerization and phosphorylation stretch occupies residues 1 to 134; sequence MASSSTSSEE…ALAKAIEKNV (134 aa). A disordered region spans residues 63-93; it reads QMVSQQKSSSRSDSREDEVSPPMNPVVKGRR. A Pseudophosphorylation motif motif is present at residues 94 to 98; that stretch reads RRGAI. 3',5'-cyclic AMP is bound by residues 135–252, Glu200, Arg209, 253–379, Glu324, and Arg333; these read LFAH…SKVS and ILES…SLSV.

The protein belongs to the cAMP-dependent kinase regulatory chain family. The inactive holoenzyme is composed of two regulatory chains and two catalytic chains. Activation by cAMP releases the two active catalytic monomers and the regulatory dimer. Interacts with PRKACA and PRKACB. Interacts with PRRC1; resulting in PKA activation. In terms of processing, the pseudophosphorylation site binds to the substrate-binding region of the catalytic chain, resulting in the inhibition of its activity.

It is found in the cell membrane. Regulatory subunit of the cAMP-dependent protein kinases involved in cAMP signaling in cells. The protein is cAMP-dependent protein kinase type I-alpha regulatory subunit (prkar1aa) of Danio rerio (Zebrafish).